Reading from the N-terminus, the 358-residue chain is C-X-C chemokine receptor type 2 (358 aa).

The Extracellular portion of the chain corresponds to 1–46; sequence MQEFTWENYSYEDFFGDFSNYSYSTDLPPTLLDSAPCRSESLETNS. 2 N-linked (GlcNAc...) asparagine glycosylation sites follow: Asn-8 and Asn-20. Residues 47-73 form a helical membrane-spanning segment; that stretch reads YVVLITYILVFLLSLLGNSLVMLVILY. The Cytoplasmic segment spans residues 74 to 82; it reads SRSTCSVTD. The helical transmembrane segment at 83 to 103 threads the bilayer; the sequence is VYLLNLAIADLLFATTLPIWA. Residues 104–118 are Extracellular-facing; the sequence is ASKVHGWTFGTPLCK. A disulfide bond links Cys-117 and Cys-194. The helical transmembrane segment at 119 to 140 threads the bilayer; sequence VVSLVKEVNFYSGILLLACISV. Residues 141–161 are Cytoplasmic-facing; that stretch reads DRYLAIVHATRTMIQKRHLVK. A helical transmembrane segment spans residues 162–181; that stretch reads FICLSMWGVSLILSLPILLF. The Extracellular portion of the chain corresponds to 182-206; sequence RNAIFPPNSSPVCYEDMGNSTAKWR. The chain crosses the membrane as a helical span at residues 207–229; the sequence is MVLRILPQTFGFILPLLVMLFCY. The Cytoplasmic segment spans residues 230-249; it reads VFTLRTLFQAHMGQKHRAMR. The helical transmembrane segment at 250–271 threads the bilayer; that stretch reads VIFAVVLIFLLCWLPYNLVLLT. Residues 272–292 lie on the Extracellular side of the membrane; the sequence is DTLMRTHVIQETCERRNDIDR. Residues 293-313 form a helical membrane-spanning segment; it reads ALDATEILGFLHSCLNPIIYA. The Cytoplasmic segment spans residues 314–358; that stretch reads FIGQKFRYGLLKILAAHGLISKEFLAKESRPSFVASSSGNTSTTL.

The protein belongs to the G-protein coupled receptor 1 family. In terms of assembly, interacts with IL8. Interacts with GNAI2. Post-translationally, phosphorylated upon ligand binding; which is required for desensitization. Expressed preferentially in neutrophils.

The protein localises to the cell membrane. Its function is as follows. Receptor for interleukin-8 which is a powerful neutrophil chemotactic factor. Binding of IL-8 to the receptor causes activation of neutrophils. This response is mediated via a G-protein that activates a phosphatidylinositol-calcium second messenger system. Binds to IL-8 with high affinity. Also binds with high affinity to CXCL3, GRO/MGSA and NAP-2. The protein is C-X-C chemokine receptor type 2 (CXCR2) of Oryctolagus cuniculus (Rabbit).